We begin with the raw amino-acid sequence, 188 residues long: Peptide deformylase (188 aa).

Positions 94 and 136 each coordinate Fe cation. Glutamate 137 is an active-site residue. Histidine 140 is a binding site for Fe cation.

This sequence belongs to the polypeptide deformylase family. Requires Fe(2+) as cofactor.

The enzyme catalyses N-terminal N-formyl-L-methionyl-[peptide] + H2O = N-terminal L-methionyl-[peptide] + formate. Its function is as follows. Removes the formyl group from the N-terminal Met of newly synthesized proteins. Requires at least a dipeptide for an efficient rate of reaction. N-terminal L-methionine is a prerequisite for activity but the enzyme has broad specificity at other positions. This chain is Peptide deformylase, found in Chlorobium phaeobacteroides (strain DSM 266 / SMG 266 / 2430).